A 180-amino-acid polypeptide reads, in one-letter code: MILSDRSIRELIEKGELKVEPYEPSHVQCSSLDLRLGNQIALYEGEGVIDVKKGTKGVRILEFEEYFDIMPKQFLLATTLEYISLPPYVTAFVEGRSSLGRLGLFIENAGWVDAGFEGQITLELFNANDRPIRLYRGMRICQLVFARLDRPPERVYSGKYKGQKGVVPSRIHMDEELKSE.

DCTP-binding positions include 96-101 (RSSLGR), aspartate 113, 121-123 (TLE), glutamine 142, tyrosine 156, and glutamine 163. Glutamate 123 functions as the Proton donor/acceptor in the catalytic mechanism.

Belongs to the dCTP deaminase family. Homotrimer.

It catalyses the reaction dCTP + 2 H2O = dUMP + NH4(+) + diphosphate. Its pathway is pyrimidine metabolism; dUMP biosynthesis; dUMP from dCTP: step 1/1. In terms of biological role, bifunctional enzyme that catalyzes both the deamination of dCTP to dUTP and the hydrolysis of dUTP to dUMP without releasing the toxic dUTP intermediate. This chain is dCTP deaminase, dUMP-forming, found in Aquifex aeolicus (strain VF5).